Consider the following 552-residue polypeptide: Cation/acetate symporter ActP (552 aa).

14 helical membrane passes run 6–26 (LLAV…AIAG), 35–55 (MEAI…TYWA), 78–98 (GLAM…SALV), 103–123 (FDGL…LFLI), 151–171 (LSAC…MVGA), 185–205 (VAVV…GMLA), 208–228 (WVQI…AIMV), 264–284 (ISAL…PHIL), 305–325 (GLMG…ILLV), 357–377 (LFLG…VAGL), 407–427 (VSKI…ILFE), 431–451 (IAFM…PIIL), 467–487 (GGWL…TIWV), and 496–516 (IFPY…GTWL).

Belongs to the sodium:solute symporter (SSF) (TC 2.A.21) family.

The protein localises to the cell inner membrane. Its function is as follows. Transports acetate. This chain is Cation/acetate symporter ActP, found in Erwinia tasmaniensis (strain DSM 17950 / CFBP 7177 / CIP 109463 / NCPPB 4357 / Et1/99).